A 449-amino-acid polypeptide reads, in one-letter code: Integrator complex subunit 15 (449 aa).

It belongs to the Integrator subunit 15 family. As to quaternary structure, component of the Integrator complex, composed of core subunits INTS1, INTS2, INTS3, INTS4, INTS5, INTS6, INTS7, INTS8, INTS9/RC74, INTS10, INTS11/CPSF3L, INTS12, INTS13, INTS14 and INTS15. The core complex associates with protein phosphatase 2A subunits PPP2CA and PPP2R1A, to form the Integrator-PP2A (INTAC) complex. INTS15 is part of the tail subcomplex, composed of INTS10, INTS13, INTS14 and INTS15.

It is found in the nucleus. It localises to the chromosome. Its function is as follows. Component of the integrator complex, a multiprotein complex that terminates RNA polymerase II (Pol II) transcription in the promoter-proximal region of genes. The integrator complex provides a quality checkpoint during transcription elongation by driving premature transcription termination of transcripts that are unfavorably configured for transcriptional elongation: the complex terminates transcription by (1) catalyzing dephosphorylation of the C-terminal domain (CTD) of Pol II subunit POLR2A/RPB1 and SUPT5H/SPT5, (2) degrading the exiting nascent RNA transcript via endonuclease activity and (3) promoting the release of Pol II from bound DNA. The integrator complex is also involved in terminating the synthesis of non-coding Pol II transcripts, such as enhancer RNAs (eRNAs), small nuclear RNAs (snRNAs), telomerase RNAs and long non-coding RNAs (lncRNAs). INTS15 is part of the integrator tail module that acts as a platform for the recruitment of transcription factors at promoters. Within the integrator complex, INTS15 is required to bridge different integrator modules. The chain is Integrator complex subunit 15 from Homo sapiens (Human).